The chain runs to 1122 residues: Histone deacetylase 5 (1122 aa).

Positions 1 to 22 are disordered; it reads MNSPNESDGMSGREPSLEILPR. K35 participates in a covalent cross-link: Glycyl lysine isopeptide (Lys-Gly) (interchain with G-Cter in SUMO2). Residues 196-281 are disordered; sequence KEPTPGGLNH…KVAERRSSPL (86 aa). Residues 247 to 258 show a composition bias toward basic and acidic residues; the sequence is DSRDDFPLRKTA. A Phosphoserine; by AMPK, CaMK1, SIK1 and PKD/PRKD1 modification is found at S259. Basic and acidic residues predominate over residues 272–281; the sequence is KVAERRSSPL. T292 is modified (phosphothreonine; by PKC). Disordered regions lie at residues 302–343 and 481–504; these read GAGP…NIPT and MRTVGKLPRHRPLSRTQSSPLPQS. Residues 312-327 are compositionally biased toward low complexity; it reads NSAPGSGPSSPNSSHS. Polar residues predominate over residues 328–340; that stretch reads TIAENGFTGSVPN. Low complexity predominate over residues 494–504; the sequence is SRTQSSPLPQS. A Phosphoserine; by AMPK, CaMK1, SIK1 and PKD/PRKD1 modification is found at S498. The residue at position 533 (K533) is an N6-acetyllysine. The segment at 536 to 625 is disordered; sequence TKTGELPRQP…GPDLEEPGAG (90 aa). Positions 581-621 are enriched in acidic residues; sequence STQEDLEEEDEEEDGEEEEDCIQVKDEEGESGAEEGPDLEE. S611 and S661 each carry phosphoserine. Positions 684 to 1028 are histone deacetylase; the sequence is GVVYDTFMLK…VSALLSVELQ (345 aa). Residues C696, C698, H704, and C781 each contribute to the Zn(2+) site. The active site involves H833. Residues 1081 to 1122 carry the Nuclear export signal motif; it reads EEAETVSAMALLSVGAEQAQAAAAREHSPRPAEEPMEQEPAL. Residues 1097–1122 are disordered; it reads EQAQAAAAREHSPRPAEEPMEQEPAL. The segment covering 1104 to 1113 has biased composition (basic and acidic residues); it reads AREHSPRPAE. S1108 is modified (phosphoserine).

Belongs to the histone deacetylase family. HD type 2 subfamily. As to quaternary structure, interacts with AHRR, BAHD1, BCOR, HDAC7, HDAC9, CTBP1, MEF2C, NCOR2, NRIP1, PHB2 and a 14-3-3 chaperone protein. Interacts with BCL6, DDIT3/CHOP, GRK5, KDM5B and MYOCD. Interacts with EP300 in the presence of TFAP2C. Interacts with ANKRA2. Interacts with CUL7 (as part of the 3M complex); negatively regulated by ANKRA2. Interacts with ZBTB7B; the interaction allows the recruitment of HDAC4 on CD8 loci for deacetylation and possible inhibition of CD8 genes expression. Interacts with RARA. Post-translationally, phosphorylated by AMPK, CaMK1, SIK1 and PRKD1 at Ser-259 and Ser-498. The phosphorylation is required for the export to the cytoplasm and inhibition. Phosphorylated by the PKC kinases PKN1 and PKN2, impairing nuclear import. Phosphorylated by GRK5, leading to nuclear export of HDAC5 and allowing MEF2-mediated transcription. Ubiquitinated. Polyubiquitination however does not lead to its degradation.

The protein resides in the nucleus. It localises to the cytoplasm. It carries out the reaction N(6)-acetyl-L-lysyl-[histone] + H2O = L-lysyl-[histone] + acetate. Functionally, responsible for the deacetylation of lysine residues on the N-terminal part of the core histones (H2A, H2B, H3 and H4). Histone deacetylation gives a tag for epigenetic repression and plays an important role in transcriptional regulation, cell cycle progression and developmental events. Histone deacetylases act via the formation of large multiprotein complexes. Involved in muscle maturation by repressing transcription of myocyte enhancer MEF2C. During muscle differentiation, it shuttles into the cytoplasm, allowing the expression of myocyte enhancer factors. Serves as a corepressor of RARA and causes its deacetylation. In association with RARA, plays a role in the repression of microRNA-10a and thereby in the inflammatory response. This chain is Histone deacetylase 5 (HDAC5), found in Pongo abelii (Sumatran orangutan).